The primary structure comprises 234 residues: Putative N-acetylmannosamine-6-phosphate 2-epimerase (234 aa).

It belongs to the NanE family.

It carries out the reaction an N-acyl-D-glucosamine 6-phosphate = an N-acyl-D-mannosamine 6-phosphate. It functions in the pathway amino-sugar metabolism; N-acetylneuraminate degradation; D-fructose 6-phosphate from N-acetylneuraminate: step 3/5. Its function is as follows. Converts N-acetylmannosamine-6-phosphate (ManNAc-6-P) to N-acetylglucosamine-6-phosphate (GlcNAc-6-P). The sequence is that of Putative N-acetylmannosamine-6-phosphate 2-epimerase from Klebsiella pneumoniae (strain 342).